Consider the following 292-residue polypeptide: 4-hydroxy-tetrahydrodipicolinate synthase (292 aa).

Residue threonine 45 participates in pyruvate binding. Tyrosine 133 (proton donor/acceptor) is an active-site residue. Catalysis depends on lysine 161, which acts as the Schiff-base intermediate with substrate. Residue isoleucine 203 participates in pyruvate binding.

It belongs to the DapA family. As to quaternary structure, homotetramer; dimer of dimers.

The protein localises to the cytoplasm. It carries out the reaction L-aspartate 4-semialdehyde + pyruvate = (2S,4S)-4-hydroxy-2,3,4,5-tetrahydrodipicolinate + H2O + H(+). Its pathway is amino-acid biosynthesis; L-lysine biosynthesis via DAP pathway; (S)-tetrahydrodipicolinate from L-aspartate: step 3/4. Its function is as follows. Catalyzes the condensation of (S)-aspartate-beta-semialdehyde [(S)-ASA] and pyruvate to 4-hydroxy-tetrahydrodipicolinate (HTPA). The polypeptide is 4-hydroxy-tetrahydrodipicolinate synthase (Azoarcus sp. (strain BH72)).